The following is a 297-amino-acid chain: Light-independent protochlorophyllide reductase iron-sulfur ATP-binding protein (297 aa).

ATP contacts are provided by residues 41-46 (GIGKST) and Lys-70. Ser-45 contributes to the Mg(2+) binding site. The [4Fe-4S] cluster site is built by Cys-126 and Cys-160. ATP contacts are provided by residues 211–212 (NR) and 235–237 (PDL).

Belongs to the NifH/BchL/ChlL family. Homodimer. Protochlorophyllide reductase is composed of three subunits; BchL, BchN and BchB. [4Fe-4S] cluster is required as a cofactor.

The catalysed reaction is chlorophyllide a + oxidized 2[4Fe-4S]-[ferredoxin] + 2 ADP + 2 phosphate = protochlorophyllide a + reduced 2[4Fe-4S]-[ferredoxin] + 2 ATP + 2 H2O. It functions in the pathway porphyrin-containing compound metabolism; bacteriochlorophyll biosynthesis (light-independent). Its function is as follows. Component of the dark-operative protochlorophyllide reductase (DPOR) that uses Mg-ATP and reduced ferredoxin to reduce ring D of protochlorophyllide (Pchlide) to form chlorophyllide a (Chlide). This reaction is light-independent. The L component serves as a unique electron donor to the NB-component of the complex, and binds Mg-ATP. This is Light-independent protochlorophyllide reductase iron-sulfur ATP-binding protein from Methylorubrum extorquens (strain PA1) (Methylobacterium extorquens).